The chain runs to 328 residues: D-cysteine desulfhydrase (328 aa).

An N6-(pyridoxal phosphate)lysine modification is found at Lys51.

It belongs to the ACC deaminase/D-cysteine desulfhydrase family. As to quaternary structure, homodimer. Requires pyridoxal 5'-phosphate as cofactor.

It catalyses the reaction D-cysteine + H2O = hydrogen sulfide + pyruvate + NH4(+) + H(+). Catalyzes the alpha,beta-elimination reaction of D-cysteine and of several D-cysteine derivatives. It could be a defense mechanism against D-cysteine. This chain is D-cysteine desulfhydrase, found in Escherichia coli O6:H1 (strain CFT073 / ATCC 700928 / UPEC).